Consider the following 1031-residue polypeptide: MNTEYAELHCLSNFSFQRGASSARELFDRALRHGYAALAITDECTLAGIVRAWQASKDTGLPLIVGSEMHLENGPKIVLLVENLTGYQALCTLITVARRRAKKGEYRLLLEDFDHLPGGLLAIWLADIEGDAQACLAQGNWLRERFAERLWLGVELHRGADDEQRLADLLALAQSLAIPAVASGDVHMHARGRRALQDTITAIRHHTTVAEAGHLLFANGERHLRSLDALAEHYPDWLLAESLRIARRCTFTFDQLQYEYPHELVPKGQTSTSWLRELTERGIRRRWPRGLSVAARAQVEKELALITEKKFDSYFLTVHDIVEFARSQHILCQGRGSAANSAVCYALGITELNPEKSNLLFERFISKERDEPPDIDVDFEHDRREEVIQYIFRRYGRGRAALTAVASTYHGSGALRDVAKVLGLPPDQINALADAFSRWSDSLPSPERLREYGFDAETPILKRVLALTGELIGFPRHLSQHPGGFVISEHPLDTLVPVENAAMAERTIIQWDKDDLDLVGLLKVDILALGMLSALRRTFDLVHLHRGKQWTLASLPGDDRPTYEMISRADTIGVFQIESRAQMAMLPRLRPEKFYDLVIEVAIVRPGPIQGDMVHPYLRRRNKEEAITYPPKLKSVFERTLGVPLFQEQVMEVAIIAADYTPGEADQLRRAMAAWKRHGGLDPHRERLRTGMLANGYDADFADRIFEQIKGFGSYGFPESHAASFALLTYASCWLKCHEPAAFTCALINSWPMGFYSPDQLLQDARRHHIEIRPVDVRYSHWDCTLEPLDHPDSTRNLAIRLGLRMLRSFREEDALRIEAARSKRPFADATDLAQRAGLDSRAAEALADSGALRGLIGHRHRARWEVAGVEAQRPLFDDVTSEEVQVTLPLPTVAEDLVADYATLGTTLGPHPLALLRRQLAAKRFRSSQDLLSLENNRTLSVAGLVIGRQRPGTASGVTFVTLEDEFGMVNVVVWRDLAERQRKVLVGSQLLQVFGRLESNNGVRHLIAQRLYDLTPLLTGLEVRSRDFQ.

This sequence belongs to the DNA polymerase type-C family. DnaE2 subfamily.

It localises to the cytoplasm. The enzyme catalyses DNA(n) + a 2'-deoxyribonucleoside 5'-triphosphate = DNA(n+1) + diphosphate. Functionally, DNA polymerase involved in damage-induced mutagenesis and translesion synthesis (TLS). It is not the major replicative DNA polymerase. The protein is Error-prone DNA polymerase of Pseudomonas syringae pv. tomato (strain ATCC BAA-871 / DC3000).